The primary structure comprises 198 residues: uncharacterized protein (198 aa).

Residues 166–198 (GYEPDEKARKKRERVKRSEVEDQLKINVKPTRR) are disordered.

This is an uncharacterized protein from Coxiella burnetii (strain RSA 493 / Nine Mile phase I).